The chain runs to 117 residues: Large ribosomal subunit protein uL24 (117 aa).

Positions 1 to 12 (MSKKNSQTSPQR) are enriched in polar residues. The interval 1-20 (MSKKNSQTSPQRQKMHVKKG) is disordered.

It belongs to the universal ribosomal protein uL24 family. In terms of assembly, part of the 50S ribosomal subunit.

Functionally, one of two assembly initiator proteins, it binds directly to the 5'-end of the 23S rRNA, where it nucleates assembly of the 50S subunit. Its function is as follows. One of the proteins that surrounds the polypeptide exit tunnel on the outside of the subunit. The sequence is that of Large ribosomal subunit protein uL24 from Microcystis aeruginosa (strain NIES-843 / IAM M-2473).